A 199-amino-acid polypeptide reads, in one-letter code: Outer-membrane lipoprotein LolB (199 aa).

Positions 1-28 (MAAAGSLCQTAWRVRGWLAAGLCALLAG) are cleaved as a signal peptide. Cysteine 29 carries the N-palmitoyl cysteine lipid modification. Residue cysteine 29 is the site of S-diacylglycerol cysteine attachment.

The protein belongs to the LolB family. Monomer.

It localises to the cell outer membrane. Its function is as follows. Plays a critical role in the incorporation of lipoproteins in the outer membrane after they are released by the LolA protein. In Bordetella petrii (strain ATCC BAA-461 / DSM 12804 / CCUG 43448), this protein is Outer-membrane lipoprotein LolB.